The primary structure comprises 365 residues: Succinyl-diaminopimelate desuccinylase (365 aa).

Histidine 64 is a Zn(2+) binding site. Aspartate 66 is an active-site residue. A Zn(2+)-binding site is contributed by aspartate 95. The Proton acceptor role is filled by glutamate 125. Zn(2+) is bound by residues glutamate 126, glutamate 154, and histidine 339.

Belongs to the peptidase M20A family. DapE subfamily. Homodimer. The cofactor is Zn(2+). It depends on Co(2+) as a cofactor.

It catalyses the reaction N-succinyl-(2S,6S)-2,6-diaminopimelate + H2O = (2S,6S)-2,6-diaminopimelate + succinate. It participates in amino-acid biosynthesis; L-lysine biosynthesis via DAP pathway; LL-2,6-diaminopimelate from (S)-tetrahydrodipicolinate (succinylase route): step 3/3. Functionally, catalyzes the hydrolysis of N-succinyl-L,L-diaminopimelic acid (SDAP), forming succinate and LL-2,6-diaminopimelate (DAP), an intermediate involved in the bacterial biosynthesis of lysine and meso-diaminopimelic acid, an essential component of bacterial cell walls. This Campylobacter fetus subsp. fetus (strain 82-40) protein is Succinyl-diaminopimelate desuccinylase.